We begin with the raw amino-acid sequence, 213 residues long: Lysozyme g-like protein 2 (213 aa).

An N-terminal signal peptide occupies residues 1-19 (MVPSVVFWGLIALVGTAKG). 2 cysteine pairs are disulfide-bonded: Cys40-Cys93 and Cys54-Cys62. Residue Glu106 is part of the active site.

It belongs to the glycosyl hydrolase 23 family.

It is found in the secreted. Its function is as follows. May act as a potent antibacterial protein that may play a role in the innate immunity. The protein is Lysozyme g-like protein 2 (Lyg2) of Mus musculus (Mouse).